A 428-amino-acid chain; its full sequence is Dihydroorotase (428 aa).

2 residues coordinate Zn(2+): His59 and His61. Substrate is bound by residues His61–Arg63 and Asn93. Positions 151, 178, and 231 each coordinate Zn(2+). Substrate is bound at residue Asn277. Asp304 is a binding site for Zn(2+). Asp304 is a catalytic residue. Residues His308 and Phe322–Gly323 each bind substrate.

This sequence belongs to the metallo-dependent hydrolases superfamily. DHOase family. Class I DHOase subfamily. Requires Zn(2+) as cofactor.

The catalysed reaction is (S)-dihydroorotate + H2O = N-carbamoyl-L-aspartate + H(+). It functions in the pathway pyrimidine metabolism; UMP biosynthesis via de novo pathway; (S)-dihydroorotate from bicarbonate: step 3/3. Functionally, catalyzes the reversible cyclization of carbamoyl aspartate to dihydroorotate. In Bacillus cereus (strain ATCC 14579 / DSM 31 / CCUG 7414 / JCM 2152 / NBRC 15305 / NCIMB 9373 / NCTC 2599 / NRRL B-3711), this protein is Dihydroorotase.